A 209-amino-acid chain; its full sequence is Uracil phosphoribosyltransferase (209 aa).

5-phospho-alpha-D-ribose 1-diphosphate contacts are provided by residues R79, R104, and 131–139; that span reads DPMLATGGS. Residues I194 and 199 to 201 each bind uracil; that span reads GDA. D200 is a 5-phospho-alpha-D-ribose 1-diphosphate binding site.

This sequence belongs to the UPRTase family. Mg(2+) is required as a cofactor.

The catalysed reaction is UMP + diphosphate = 5-phospho-alpha-D-ribose 1-diphosphate + uracil. It participates in pyrimidine metabolism; UMP biosynthesis via salvage pathway; UMP from uracil: step 1/1. Its activity is regulated as follows. Allosterically activated by GTP. In terms of biological role, catalyzes the conversion of uracil and 5-phospho-alpha-D-ribose 1-diphosphate (PRPP) to UMP and diphosphate. In Geobacter sp. (strain M21), this protein is Uracil phosphoribosyltransferase.